The primary structure comprises 203 residues: Twist-related protein 1 (203 aa).

The span at Met1–Ser18 shows a compositional bias: low complexity. The disordered stretch occupies residues Met1–Leu107. Over residues Arg34–Arg43 the composition is skewed to basic residues. 2 stretches are compositionally biased toward gly residues: residues Ala46 to Glu65 and Gly80 to Ser100. The 52-residue stretch at Thr109–Leu160 folds into the bHLH domain. The interval Arg162–Arg192 is sufficient for transactivation activity.

In terms of assembly, efficient DNA binding requires dimerization with another bHLH protein. Homodimer or heterodimer with E proteins such as TCF3. ID1 binds preferentially to TCF3 but does not interact efficiently with TWIST1 so ID1 levels control the amount of TCF3 available to dimerize with TWIST and thus determine the type of dimer formed.

The protein resides in the nucleus. Acts as a transcriptional regulator. Inhibits myogenesis by sequestrating E proteins, inhibiting trans-activation by MEF2, and inhibiting DNA-binding by MYOD1 through physical interaction. This interaction probably involves the basic domains of both proteins. Also represses expression of pro-inflammatory cytokines such as TNFA and IL1B. Regulates cranial suture patterning and fusion. Activates transcription as a heterodimer with E proteins. Regulates gene expression differentially, depending on dimer composition. Homodimers induce expression of FGFR2 and POSTN while heterodimers repress FGFR2 and POSTN expression and induce THBS1 expression. Heterodimerization is also required for osteoblast differentiation. Represses the activity of the circadian transcriptional activator: NPAS2-BMAL1 heterodimer. In Gorilla gorilla gorilla (Western lowland gorilla), this protein is Twist-related protein 1 (TWIST1).